The sequence spans 101 residues: Acylphosphatase (101 aa).

The 87-residue stretch at 15–101 folds into the Acylphosphatase-like domain; the sequence is RMYARVYGLV…KGEFEDFETY (87 aa). Active-site residues include Arg30 and Asn48.

The protein belongs to the acylphosphatase family.

It catalyses the reaction an acyl phosphate + H2O = a carboxylate + phosphate + H(+). The chain is Acylphosphatase (acyP) from Saccharolobus solfataricus (strain ATCC 35092 / DSM 1617 / JCM 11322 / P2) (Sulfolobus solfataricus).